We begin with the raw amino-acid sequence, 344 residues long: uncharacterized protein (344 aa).

An N-terminal signal peptide occupies residues 1–20 (MEIRIMLFILMMMVMPVSYA).

It belongs to the fimbrial protein family.

In terms of biological role, part of the yehABCD fimbrial operon. Could contribute to adhesion to various surfaces in specific environmental niches. This is an uncharacterized protein from Escherichia coli (strain K12).